A 120-amino-acid chain; its full sequence is Large ribosomal subunit protein bL12 (120 aa).

Over residues 95-112 (KEGVSKEEAEEVQGKLEE) the composition is skewed to basic and acidic residues. The disordered stretch occupies residues 95-120 (KEGVSKEEAEEVQGKLEEAGASVEVK).

The protein belongs to the bacterial ribosomal protein bL12 family. In terms of assembly, homodimer. Part of the ribosomal stalk of the 50S ribosomal subunit. Forms a multimeric L10(L12)X complex, where L10 forms an elongated spine to which 2 to 4 L12 dimers bind in a sequential fashion. Binds GTP-bound translation factors.

Its function is as follows. Forms part of the ribosomal stalk which helps the ribosome interact with GTP-bound translation factors. Is thus essential for accurate translation. The polypeptide is Large ribosomal subunit protein bL12 (Oceanobacillus iheyensis (strain DSM 14371 / CIP 107618 / JCM 11309 / KCTC 3954 / HTE831)).